The chain runs to 453 residues: Gamma-aminobutyric acid receptor subunit alpha-6 (453 aa).

The first 19 residues, 1–19 (MVLLLPWLFIILWLENAQA), serve as a signal peptide directing secretion. The Extracellular portion of the chain corresponds to 20–243 (QLEDEGNFYS…FHLQRKMGYF (224 aa)). A glycan (N-linked (GlcNAc...) asparagine) is linked at Asn-31. 4-aminobutanoate is bound at residue Arg-84. N-linked (GlcNAc...) asparagine glycans are attached at residues Asn-128 and Asn-141. Thr-147 provides a ligand contact to 4-aminobutanoate. A disulfide bond links Cys-156 and Cys-170. Residues 244–264 (MIQIYTPCIMTVILSQVSFWI) traverse the membrane as a helical segment. The Cytoplasmic portion of the chain corresponds to 265-270 (NKESVP). Residues 271–290 (ARTVFGITTVLTMTTLSISA) traverse the membrane as a helical segment. Residues 291–304 (RHSLPKVSYATAMD) lie on the Extracellular side of the membrane. Residues 305–325 (WFIAVCFAFVFSALIEFAAVN) traverse the membrane as a helical segment. The Cytoplasmic portion of the chain corresponds to 326 to 422 (YFTNLQSQKA…GTSKIDQYSR (97 aa)). Phosphoserine is present on Ser-375. The helical transmembrane segment at 423–443 (ILFPVAFAGFNLVYWIVYLSK) threads the bilayer. Residues 444 to 453 (DTMEVSSTVE) lie on the Extracellular side of the membrane.

This sequence belongs to the ligand-gated ion channel (TC 1.A.9) family. Gamma-aminobutyric acid receptor (TC 1.A.9.5) subfamily. GABRA6 sub-subfamily. Heteropentamer, formed by a combination of alpha (GABRA1-6), beta (GABRB1-3), gamma (GABRG1-3), delta (GABRD), epsilon (GABRE), rho (GABRR1-3), pi (GABRP) and theta (GABRQ) chains, each subunit exhibiting distinct physiological and pharmacological properties. Binds UBQLN1. As to expression, expressed in brain, in cerebellar granule cells.

The protein localises to the postsynaptic cell membrane. Its subcellular location is the cell membrane. It catalyses the reaction chloride(in) = chloride(out). Alpha subunit of the heteropentameric ligand-gated chloride channel gated by gamma-aminobutyric acid (GABA), a major inhibitory neurotransmitter in the brain. GABA-gated chloride channels, also named GABA(A) receptors (GABAAR), consist of five subunits arranged around a central pore and contain GABA active binding site(s) located at the alpha and beta subunit interface(s). When activated by GABA, GABAARs selectively allow the flow of chloride anions across the cell membrane down their electrochemical gradient. Alpha-6/GABRA6 subunits are found at both synaptic and extrasynaptic sites. Chloride influx into the postsynaptic neuron following GABAAR opening decreases the neuron ability to generate a new action potential, thereby reducing nerve transmission. Extrasynaptic alpha-6-containing receptors contribute to the tonic GABAergic inhibition. Alpha-6 subunits are also present on glutamatergic synapses. This is Gamma-aminobutyric acid receptor subunit alpha-6 from Mus musculus (Mouse).